Consider the following 83-residue polypeptide: Putative snRNP Sm-like protein (83 aa).

The region spanning 9 to 81 is the Sm domain; sequence KPMDVLKSAL…VIFVSPSKGD (73 aa).

It belongs to the snRNP Sm proteins family.

The polypeptide is Putative snRNP Sm-like protein (Thermoplasma acidophilum (strain ATCC 25905 / DSM 1728 / JCM 9062 / NBRC 15155 / AMRC-C165)).